Consider the following 392-residue polypeptide: 3-ketoacyl-CoA thiolase (392 aa).

Catalysis depends on cysteine 95, which acts as the Acyl-thioester intermediate. Catalysis depends on proton acceptor residues histidine 347 and cysteine 377.

The protein belongs to the thiolase-like superfamily. Thiolase family. Heterotetramer of two alpha chains (FadB) and two beta chains (FadA).

The protein localises to the cytoplasm. The catalysed reaction is an acyl-CoA + acetyl-CoA = a 3-oxoacyl-CoA + CoA. It participates in lipid metabolism; fatty acid beta-oxidation. Its function is as follows. Catalyzes the final step of fatty acid oxidation in which acetyl-CoA is released and the CoA ester of a fatty acid two carbons shorter is formed. The chain is 3-ketoacyl-CoA thiolase from Chromohalobacter salexigens (strain ATCC BAA-138 / DSM 3043 / CIP 106854 / NCIMB 13768 / 1H11).